Here is a 266-residue protein sequence, read N- to C-terminus: Indole-3-glycerol phosphate synthase (266 aa).

It belongs to the TrpC family.

It carries out the reaction 1-(2-carboxyphenylamino)-1-deoxy-D-ribulose 5-phosphate + H(+) = (1S,2R)-1-C-(indol-3-yl)glycerol 3-phosphate + CO2 + H2O. It functions in the pathway amino-acid biosynthesis; L-tryptophan biosynthesis; L-tryptophan from chorismate: step 4/5. The chain is Indole-3-glycerol phosphate synthase from Paracidovorax citrulli (strain AAC00-1) (Acidovorax citrulli).